Here is a 71-residue protein sequence, read N- to C-terminus: Large ribosomal subunit protein uL29 (71 aa).

The protein belongs to the universal ribosomal protein uL29 family.

The protein is Large ribosomal subunit protein uL29 of Rickettsia massiliae (strain Mtu5).